The chain runs to 553 residues: Glutamate--tRNA ligase (553 aa).

Residues 103 to 113 (PNPSGPLHIGH) carry the 'HIGH' region motif.

It belongs to the class-I aminoacyl-tRNA synthetase family. Glutamate--tRNA ligase type 2 subfamily.

Its subcellular location is the cytoplasm. It catalyses the reaction tRNA(Glu) + L-glutamate + ATP = L-glutamyl-tRNA(Glu) + AMP + diphosphate. Its function is as follows. Catalyzes the attachment of glutamate to tRNA(Glu) in a two-step reaction: glutamate is first activated by ATP to form Glu-AMP and then transferred to the acceptor end of tRNA(Glu). This Methanothermobacter thermautotrophicus (strain ATCC 29096 / DSM 1053 / JCM 10044 / NBRC 100330 / Delta H) (Methanobacterium thermoautotrophicum) protein is Glutamate--tRNA ligase.